Consider the following 119-residue polypeptide: Large ribosomal subunit protein uL14 (119 aa).

It belongs to the universal ribosomal protein uL14 family. Part of the 50S ribosomal subunit. Forms a cluster with proteins L3 and L19. In the 70S ribosome, L14 and L19 interact and together make contacts with the 16S rRNA in bridges B5 and B8.

In terms of biological role, binds to 23S rRNA. Forms part of two intersubunit bridges in the 70S ribosome. The polypeptide is Large ribosomal subunit protein uL14 (Wolbachia pipientis wMel).